The chain runs to 515 residues: Bifunctional purine biosynthesis protein PurH (515 aa).

One can recognise an MGS-like domain in the interval 1–145 (MTKRALISVS…KNHASVTVVV (145 aa)).

The protein belongs to the PurH family.

The catalysed reaction is (6R)-10-formyltetrahydrofolate + 5-amino-1-(5-phospho-beta-D-ribosyl)imidazole-4-carboxamide = 5-formamido-1-(5-phospho-D-ribosyl)imidazole-4-carboxamide + (6S)-5,6,7,8-tetrahydrofolate. The enzyme catalyses IMP + H2O = 5-formamido-1-(5-phospho-D-ribosyl)imidazole-4-carboxamide. Its pathway is purine metabolism; IMP biosynthesis via de novo pathway; 5-formamido-1-(5-phospho-D-ribosyl)imidazole-4-carboxamide from 5-amino-1-(5-phospho-D-ribosyl)imidazole-4-carboxamide (10-formyl THF route): step 1/1. It functions in the pathway purine metabolism; IMP biosynthesis via de novo pathway; IMP from 5-formamido-1-(5-phospho-D-ribosyl)imidazole-4-carboxamide: step 1/1. This Streptococcus pyogenes serotype M18 (strain MGAS8232) protein is Bifunctional purine biosynthesis protein PurH.